Reading from the N-terminus, the 144-residue chain is Large ribosomal subunit protein uL11 (144 aa).

The protein belongs to the universal ribosomal protein uL11 family. As to quaternary structure, part of the ribosomal stalk of the 50S ribosomal subunit. Interacts with L10 and the large rRNA to form the base of the stalk. L10 forms an elongated spine to which L12 dimers bind in a sequential fashion forming a multimeric L10(L12)X complex. One or more lysine residues are methylated.

In terms of biological role, forms part of the ribosomal stalk which helps the ribosome interact with GTP-bound translation factors. This is Large ribosomal subunit protein uL11 from Francisella tularensis subsp. mediasiatica (strain FSC147).